A 772-amino-acid polypeptide reads, in one-letter code: Nudix hydrolase 3 (772 aa).

Over residues 1 to 14 the composition is skewed to basic and acidic residues; sequence MAEEHFDVLTKSGE. Residues 1 to 25 form a disordered region; it reads MAEEHFDVLTKSGEKTGVSKPRGEV. The Nudix hydrolase domain maps to 30 to 172; the sequence is DYHRAVHVWI…DPAYVPYDVN (143 aa). The short motif at 69–90 is the Nudix box element; that stretch reads GHISAGDTSLLSAQRELEEELG. Mg(2+) contacts are provided by E84 and E88.

It belongs to the Nudix hydrolase family. Mg(2+) serves as cofactor. Mn(2+) is required as a cofactor. Expressed in roots, stems and, at lower level, leaves.

Functionally, probably mediates the hydrolysis of some nucleoside diphosphate derivatives. This Arabidopsis thaliana (Mouse-ear cress) protein is Nudix hydrolase 3 (NUDT3).